Consider the following 451-residue polypeptide: MGKYFGTDGVRGVANVELTPELAYRLGRTGGYVLTKHESTRPKVLIGRDTRVSGQMLENALIAGLLSIGAEVMRLGVISTPGVAYLTKTMDATAGVMISASHNPVEDNGIKFFGSDGFKLDDATELEIEGLLDEAEDTLPRPSGKELGFVHDYYEGAQKYLHMLRQTSDEDFSGIHVAIDGAHGATSSLAPRLFGDLEAEVSTIGTTPNGLNINEGVGSTHPEHLADFVLEKGADVGLSFDGDGDRLIAIDENGKIVDGDKIMFICGKYLNEIGRLKDNTIVATVMSNLGFHKTVAEHGMTALQTAVGDRYVVEEMRKNNYTLGGEQSGHIIFMDYSTTGDGMLSGVQLLQIMKATGKKLSELAAEMPVFPQRLVNIRVSDKNGAMNGPAVQAIIAEVEAEMAGNGRILVRASGTEPLVRVMAEAPTQEACDMYVERIANVVRENYALQEN.

The active-site Phosphoserine intermediate is the Ser101. Residues Ser101, Asp241, Asp243, and Asp245 each coordinate Mg(2+). Ser101 bears the Phosphoserine mark.

This sequence belongs to the phosphohexose mutase family. The cofactor is Mg(2+). Activated by phosphorylation.

The catalysed reaction is alpha-D-glucosamine 1-phosphate = D-glucosamine 6-phosphate. Its function is as follows. Catalyzes the conversion of glucosamine-6-phosphate to glucosamine-1-phosphate. The protein is Phosphoglucosamine mutase of Exiguobacterium sibiricum (strain DSM 17290 / CCUG 55495 / CIP 109462 / JCM 13490 / 255-15).